Here is a 197-residue protein sequence, read N- to C-terminus: uncharacterized protein (197 aa).

4 helical membrane-spanning segments follow: residues 12–41 (LCIF…WVLF), 78–100 (LIQG…TALS), 120–142 (VGVF…FGCV), and 162–184 (IRFA…IFRS).

It is found in the cell membrane. This is an uncharacterized protein from Treponema pallidum (strain Nichols).